Reading from the N-terminus, the 106-residue chain is MICOS complex subunit MIC12 (106 aa).

A helical membrane pass occupies residues 11–27; the sequence is VKWTLSVGVIGSVFYLY.

The protein belongs to the MICOS complex subunit Mic12 family. As to quaternary structure, component of the mitochondrial contact site and cristae organizing system (MICOS) complex.

Its subcellular location is the mitochondrion inner membrane. In terms of biological role, component of the MICOS complex, a large protein complex of the mitochondrial inner membrane that plays crucial roles in the maintenance of crista junctions, inner membrane architecture, and formation of contact sites to the outer membrane. In Saccharomyces cerevisiae (strain RM11-1a) (Baker's yeast), this protein is MICOS complex subunit MIC12 (AIM5).